Here is a 263-residue protein sequence, read N- to C-terminus: Serine protease ami (263 aa).

A signal peptide spans 1–21; it reads MNISRVLFAVVLVLTVSTYEC. A glycan (N-linked (GlcNAc...) asparagine) is linked at Asn-2. Residues 22–26 constitute a propeptide, activation peptide; it reads RPRGR. A Peptidase S1 domain is found at 27–254; that stretch reads ILGGQDSKEK…YKSWIMETMY (228 aa). A disulfide bond links Cys-52 and Cys-68. Residue His-67 is the Charge relay system of the active site. 3 N-linked (GlcNAc...) asparagine glycosylation sites follow: Asn-73, Asn-74, and Asn-108. The active-site Charge relay system is Asp-115. 3 cysteine pairs are disulfide-bonded: Cys-149/Cys-215, Cys-180/Cys-196, and Cys-205/Cys-230. Ser-209 acts as the Charge relay system in catalysis. An N-linked (GlcNAc...) asparagine glycan is attached at Asn-255.

The protein belongs to the peptidase S1 family. In terms of tissue distribution, in the embryo, localizes to paraxial regions at the neurula stage and anterior ventral regions at the tailbud stage. From the late tailbud to tadpole stage, expressed along the forming blood vessels including the anterior cardinal veins, posterior cardinal veins, intersomitic veins, dorsal longitudinal anastomosing vessel, dorsal aorta, pronephric sinus and most prominently around the vascular vitelline network, where expression shows left-right asymmetry in the stage 42 embryo. Localizes to endothelial cells. In adults, shows highest expression in liver with moderate levels of expression in the fat body, lung, gut and vessels. Weakly expressed in adult heart, muscle, testis and ovary.

It is found in the secreted. Its function is as follows. Probable serine protease. This is Serine protease ami from Xenopus laevis (African clawed frog).